A 258-amino-acid polypeptide reads, in one-letter code: Tetratricopeptide repeat protein 33 (258 aa).

TPR repeat units lie at residues 59–92 (SKRL…TPGD), 93–126 (AALY…NPHF), and 127–160 (VEAW…CPAN). Residues 231-258 (SASGSENLSDRKEDKVETNDSKEFIKAR) form a disordered region. Residues 238–258 (LSDRKEDKVETNDSKEFIKAR) are compositionally biased toward basic and acidic residues.

The sequence is that of Tetratricopeptide repeat protein 33 (ttc33) from Xenopus laevis (African clawed frog).